Reading from the N-terminus, the 165-residue chain is Protein SprT (165 aa).

The 149-residue stretch at 10–158 (EACYRQAEHF…CRRCKATLVF (149 aa)) folds into the SprT-like domain. His-69 lines the Zn(2+) pocket. Glu-70 is a catalytic residue. A Zn(2+)-binding site is contributed by His-73.

It belongs to the SprT family. Zn(2+) is required as a cofactor.

It localises to the cytoplasm. The protein is Protein SprT of Pseudomonas aeruginosa (strain LESB58).